The following is an 804-amino-acid chain: Probable replication endonuclease from prophage-like region (804 aa).

Residues tyrosine 498 and tyrosine 502 each act as O-(5'-phospho-DNA)-tyrosine intermediate in the active site.

Belongs to the phage GPA family.

Functionally, possible endonuclease which induces a single-strand cut and initiates DNA replication. In Shigella boydii serotype 4 (strain Sb227), this protein is Probable replication endonuclease from prophage-like region.